We begin with the raw amino-acid sequence, 553 residues long: Transcriptional regulator HilA (553 aa).

A DNA-binding region (ompR/PhoB-type) is located at residues 11-107 (NKKFVFDDFI…LYGQGYRFNR (97 aa)). Aspartate 62 bears the 4-aspartylphosphate mark. A TPR repeat occupies 372 to 405 (ADIKYYYGWNLFMAGQLEEALQTINECLKLDPTR).

Functionally, the main transcriptional regulator of the Salmonella pathogenicity island 1 (SPI1) gene expression. Activates the expression of invasion genes by a direct action at their promoters and also indirectly by increasing the level of InvF. Also binds upstream of prgH and directly activates the expression of prgHIJK operon. This chain is Transcriptional regulator HilA (hilA), found in Salmonella typhimurium (strain LT2 / SGSC1412 / ATCC 700720).